The following is a 404-amino-acid chain: Cysteine desulfurase IscS (404 aa).

Pyridoxal 5'-phosphate-binding positions include 75 to 76 (AT), Asn155, Gln183, and 203 to 205 (SAH). N6-(pyridoxal phosphate)lysine is present on Lys206. A pyridoxal 5'-phosphate-binding site is contributed by Thr243. Residue Cys328 is the Cysteine persulfide intermediate of the active site. Cys328 contributes to the [2Fe-2S] cluster binding site.

It belongs to the class-V pyridoxal-phosphate-dependent aminotransferase family. NifS/IscS subfamily. As to quaternary structure, homodimer. Forms a heterotetramer with IscU, interacts with other sulfur acceptors. It depends on pyridoxal 5'-phosphate as a cofactor.

It is found in the cytoplasm. It catalyses the reaction (sulfur carrier)-H + L-cysteine = (sulfur carrier)-SH + L-alanine. It functions in the pathway cofactor biosynthesis; iron-sulfur cluster biosynthesis. Its function is as follows. Master enzyme that delivers sulfur to a number of partners involved in Fe-S cluster assembly, tRNA modification or cofactor biosynthesis. Catalyzes the removal of elemental sulfur atoms from cysteine to produce alanine. Functions as a sulfur delivery protein for Fe-S cluster synthesis onto IscU, an Fe-S scaffold assembly protein, as well as other S acceptor proteins. The polypeptide is Cysteine desulfurase IscS (Aeromonas salmonicida (strain A449)).